The primary structure comprises 201 residues: Protein GrpE (201 aa).

Belongs to the GrpE family. Homodimer.

The protein resides in the cytoplasm. Functionally, participates actively in the response to hyperosmotic and heat shock by preventing the aggregation of stress-denatured proteins, in association with DnaK and GrpE. It is the nucleotide exchange factor for DnaK and may function as a thermosensor. Unfolded proteins bind initially to DnaJ; upon interaction with the DnaJ-bound protein, DnaK hydrolyzes its bound ATP, resulting in the formation of a stable complex. GrpE releases ADP from DnaK; ATP binding to DnaK triggers the release of the substrate protein, thus completing the reaction cycle. Several rounds of ATP-dependent interactions between DnaJ, DnaK and GrpE are required for fully efficient folding. In Shewanella frigidimarina (strain NCIMB 400), this protein is Protein GrpE.